Consider the following 20-residue polypeptide: AKLDFDRSKEHVNVGTIGVH.

This sequence belongs to the GTP-binding elongation factor family. EF-Tu/EF-1A subfamily. In terms of assembly, monomer.

The protein localises to the cytoplasm. This protein promotes the GTP-dependent binding of aminoacyl-tRNA to the A-site of ribosomes during protein biosynthesis. This is Elongation factor Tu (tuf) from Mycoplasmopsis synoviae (Mycoplasma synoviae).